The sequence spans 129 residues: Follitropin subunit beta (129 aa).

The first 19 residues, Met1–Arg19, serve as a signal peptide directing secretion. Disulfide bonds link Cys21–Cys69, Cys35–Cys84, Cys38–Cys122, Cys46–Cys100, Cys50–Cys102, and Cys105–Cys112. 2 N-linked (GlcNAc...) asparagine glycosylation sites follow: Asn25 and Asn42.

The protein belongs to the glycoprotein hormones subunit beta family. Heterodimer. The active follitropin is a heterodimer composed of an alpha chain/CGA shared with other hormones and a unique beta chain/FSHB shown here.

The protein localises to the secreted. Its function is as follows. Together with the alpha chain CGA constitutes follitropin, the follicle-stimulating hormone, and provides its biological specificity to the hormone heterodimer. Binds FSHR, a G protein-coupled receptor, on target cells to activate downstream signaling pathways. Follitropin is involved in follicle development and spermatogenesis in reproductive organs. This is Follitropin subunit beta (FSHB) from Ovis aries (Sheep).